Reading from the N-terminus, the 437-residue chain is Type II methylase M.HgiEI (437 aa).

An SAM-dependent MTase C5-type domain is found at Phe4 to Glu431. Cys75 is a catalytic residue.

It belongs to the class I-like SAM-binding methyltransferase superfamily. C5-methyltransferase family.

The enzyme catalyses a 2'-deoxycytidine in DNA + S-adenosyl-L-methionine = a 5-methyl-2'-deoxycytidine in DNA + S-adenosyl-L-homocysteine + H(+). Its function is as follows. A methylase that recognizes the double-stranded sequence 5'-GGWCC-3', methylates C-? on both strands, and protects the DNA from cleavage by the HgiEI endonuclease. This system is more active than isoschizomeric RM.HgiBI. The sequence is that of Type II methylase M.HgiEI from Herpetosiphon aurantiacus (Herpetosiphon giganteus).